Here is a 568-residue protein sequence, read N- to C-terminus: Urease subunit alpha (568 aa).

The region spanning 131–568 is the Urease domain; sequence GGIDTHIHFI…LPMAQRYFLF (438 aa). The Ni(2+) site is built by histidine 136, histidine 138, and lysine 219. An N6-carboxylysine modification is found at lysine 219. Histidine 221 serves as a coordination point for substrate. Histidine 248 and histidine 274 together coordinate Ni(2+). Histidine 322 functions as the Proton donor in the catalytic mechanism. Aspartate 362 contributes to the Ni(2+) binding site.

Belongs to the metallo-dependent hydrolases superfamily. Urease alpha subunit family. As to quaternary structure, heterotrimer of UreA (gamma), UreB (beta) and UreC (alpha) subunits. Three heterotrimers associate to form the active enzyme. Requires Ni cation as cofactor. Post-translationally, carboxylation allows a single lysine to coordinate two nickel ions.

Its subcellular location is the cytoplasm. The enzyme catalyses urea + 2 H2O + H(+) = hydrogencarbonate + 2 NH4(+). Its pathway is nitrogen metabolism; urea degradation; CO(2) and NH(3) from urea (urease route): step 1/1. This chain is Urease subunit alpha, found in Trichormus variabilis (strain ATCC 29413 / PCC 7937) (Anabaena variabilis).